Consider the following 422-residue polypeptide: UDP-N-acetylglucosamine 1-carboxyvinyltransferase (422 aa).

22–23 (KN) serves as a coordination point for phosphoenolpyruvate. Arg-93 is a UDP-N-acetyl-alpha-D-glucosamine binding site. The active-site Proton donor is Cys-117. The residue at position 117 (Cys-117) is a 2-(S-cysteinyl)pyruvic acid O-phosphothioketal. UDP-N-acetyl-alpha-D-glucosamine-binding positions include 122–126 (RPVDQ), Asp-305, and Ile-327.

It belongs to the EPSP synthase family. MurA subfamily.

It is found in the cytoplasm. It catalyses the reaction phosphoenolpyruvate + UDP-N-acetyl-alpha-D-glucosamine = UDP-N-acetyl-3-O-(1-carboxyvinyl)-alpha-D-glucosamine + phosphate. The protein operates within cell wall biogenesis; peptidoglycan biosynthesis. Functionally, cell wall formation. Adds enolpyruvyl to UDP-N-acetylglucosamine. This chain is UDP-N-acetylglucosamine 1-carboxyvinyltransferase, found in Bordetella bronchiseptica (strain ATCC BAA-588 / NCTC 13252 / RB50) (Alcaligenes bronchisepticus).